We begin with the raw amino-acid sequence, 198 residues long: Penicillin-binding protein activator LpoB (198 aa).

The signal sequence occupies residues 1-19 (MIRSVNRTGALMMALILSG). Cysteine 20 carries N-palmitoyl cysteine lipidation. A lipid anchor (S-diacylglycerol cysteine) is attached at cysteine 20. Positions 26 to 37 (QPAPVEPTQPVE) are enriched in low complexity. Residues 26–59 (QPAPVEPTQPVEPVQPVPQPEQPIPQPQPVPQPP) form a disordered region. Residues 38–59 (PVQPVPQPEQPIPQPQPVPQPP) are compositionally biased toward pro residues.

This sequence belongs to the LpoB family. Interacts with PBP1b.

Its subcellular location is the cell outer membrane. Functionally, regulator of peptidoglycan synthesis that is essential for the function of penicillin-binding protein 1B (PBP1b). In Pantoea ananatis (strain LMG 20103), this protein is Penicillin-binding protein activator LpoB.